Here is a 202-residue protein sequence, read N- to C-terminus: FMN reductase (NADH) RutF (202 aa).

Over residues 168–191 (PRAPRGGSAPAEPARGARAIGARP) the composition is skewed to low complexity. The disordered stretch occupies residues 168–202 (PRAPRGGSAPAEPARGARAIGARPPEGPVLALRSA).

It belongs to the non-flavoprotein flavin reductase family. RutF subfamily.

It catalyses the reaction FMNH2 + NAD(+) = FMN + NADH + 2 H(+). Its function is as follows. Catalyzes the reduction of FMN to FMNH2 which is used to reduce pyrimidine by RutA via the Rut pathway. In Methylorubrum populi (strain ATCC BAA-705 / NCIMB 13946 / BJ001) (Methylobacterium populi), this protein is FMN reductase (NADH) RutF.